The sequence spans 61 residues: uncharacterized protein (61 aa).

This is an uncharacterized protein from Haemophilus influenzae (strain ATCC 51907 / DSM 11121 / KW20 / Rd).